The sequence spans 195 residues: Imidazoleglycerol-phosphate dehydratase (195 aa).

Belongs to the imidazoleglycerol-phosphate dehydratase family.

The protein localises to the cytoplasm. It carries out the reaction D-erythro-1-(imidazol-4-yl)glycerol 3-phosphate = 3-(imidazol-4-yl)-2-oxopropyl phosphate + H2O. Its pathway is amino-acid biosynthesis; L-histidine biosynthesis; L-histidine from 5-phospho-alpha-D-ribose 1-diphosphate: step 6/9. This Desulfosudis oleivorans (strain DSM 6200 / JCM 39069 / Hxd3) (Desulfococcus oleovorans) protein is Imidazoleglycerol-phosphate dehydratase.